We begin with the raw amino-acid sequence, 125 residues long: DNA-directed RNA polymerase subunit omega (125 aa).

This sequence belongs to the RNA polymerase subunit omega family. The RNAP catalytic core consists of 2 alpha, 1 beta, 1 beta' and 1 omega subunit. When a sigma factor is associated with the core the holoenzyme is formed, which can initiate transcription.

The catalysed reaction is RNA(n) + a ribonucleoside 5'-triphosphate = RNA(n+1) + diphosphate. Functionally, promotes RNA polymerase assembly. Latches the N- and C-terminal regions of the beta' subunit thereby facilitating its interaction with the beta and alpha subunits. The chain is DNA-directed RNA polymerase subunit omega from Zymomonas mobilis subsp. mobilis (strain ATCC 31821 / ZM4 / CP4).